Reading from the N-terminus, the 84-residue chain is U21-theraphotoxin-Cg1a 3 (84 aa).

An N-terminal signal peptide occupies residues 1 to 21; that stretch reads MKVSVLITLAVLGVMFLLTSA. A propeptide spanning residues 22–47 is cleaved from the precursor; that stretch reads EERGSDQMDSPAWLKSMERIFQSEER. 3 disulfide bridges follow: cysteine 49/cysteine 63, cysteine 56/cysteine 68, and cysteine 62/cysteine 76. Valine 82 carries the post-translational modification Valine amide.

Belongs to the neurotoxin 10 (Hwtx-1) family. 05 (F4a) subfamily. In terms of tissue distribution, expressed by the venom gland.

It localises to the secreted. In terms of biological role, probable ion channel inhibitor. The sequence is that of U21-theraphotoxin-Cg1a 3 from Chilobrachys guangxiensis (Chinese earth tiger tarantula).